Here is a 147-residue protein sequence, read N- to C-terminus: Protein-export protein SecB 2 (147 aa).

Belongs to the SecB family. Homotetramer, a dimer of dimers. One homotetramer interacts with 1 SecA dimer.

It localises to the cytoplasm. Its function is as follows. One of the proteins required for the normal export of preproteins out of the cell cytoplasm. It is a molecular chaperone that binds to a subset of precursor proteins, maintaining them in a translocation-competent state. It also specifically binds to its receptor SecA. This Francisella tularensis subsp. novicida (strain U112) protein is Protein-export protein SecB 2.